Consider the following 92-residue polypeptide: Small ribosomal subunit protein uS19 (92 aa).

The protein belongs to the universal ribosomal protein uS19 family.

Its function is as follows. Protein S19 forms a complex with S13 that binds strongly to the 16S ribosomal RNA. The sequence is that of Small ribosomal subunit protein uS19 from Methylocella silvestris (strain DSM 15510 / CIP 108128 / LMG 27833 / NCIMB 13906 / BL2).